A 552-amino-acid polypeptide reads, in one-letter code: MLFAPPNLETKELFWIIYILILIPKVFAKVMSVRELFPFFKWGFNIRRSNFLVPILSNNVIVTGEEAVQYEKPLPYIPQHNQQQQQKQQPSQDYIQQPQNDNNINSGKEQEQQQQQQQQQQQTPDITNQPTKTNKKIPIKELSNEEILIKLEKGEVLAYRLENELGDCSRAVEIRRMLLEKQLSKKIEPIPHEGFDFAKVQGQCCENVIGYVPIPVGTAGPIQLNGQLVTIPMATTEGCLVASTHRGCKAITESGGAKCTITSRGMTRAPVVRFSDIVKASEFVSWINDTDNYQALKAVFDSTSRFARLSAIKCTIAGRSVYIRFKCDTGDAMGMNMVSKGVEAVLEHLKIIFDDMTLLSISGNMCTDKKPSSINWTEGRGRSVVCEAMITGDVVQRVLKTNVQALVDLNIAKNLIGSAMAGSIGGFNAHASNIVTAIFLATGQDCAQNVESSNCITQMEACNDGQDLYITVTMPSIEVGTVGGGTSLPAQSACLDIIGVKGSSSSKPGANADQLAKTIASAVMAGELSLMSALSAGHLMKSHLQYNRAKTN.

Low complexity-rich tracts occupy residues Gln-79 to Gln-99 and Gln-112 to Gln-122. The tract at residues Gln-79–Pro-138 is disordered. Positions Thr-123 to Lys-132 are enriched in polar residues. Residue Glu-237 is the Charge relay system of the active site. Residue Asn-288 is glycosylated (N-linked (GlcNAc...) asparagine). Lys-369 (charge relay system) is an active-site residue. N-linked (GlcNAc...) asparagine glycosylation is present at Asn-375. Asp-445 acts as the Charge relay system in catalysis. His-543 functions as the Proton donor in the catalytic mechanism.

Belongs to the HMG-CoA reductase family.

Its subcellular location is the endoplasmic reticulum membrane. The catalysed reaction is (R)-mevalonate + 2 NADP(+) + CoA = (3S)-3-hydroxy-3-methylglutaryl-CoA + 2 NADPH + 2 H(+). It functions in the pathway metabolic intermediate biosynthesis; (R)-mevalonate biosynthesis; (R)-mevalonate from acetyl-CoA: step 3/3. Its function is as follows. This transmembrane glycoprotein is involved in the control of cholesterol biosynthesis. It is the rate-limiting enzyme of the sterol biosynthesis. The protein is 3-hydroxy-3-methylglutaryl-coenzyme A reductase 1 (hmgA) of Dictyostelium discoideum (Social amoeba).